Here is a 234-residue protein sequence, read N- to C-terminus: tRNA (guanine-N(1)-)-methyltransferase (234 aa).

S-adenosyl-L-methionine contacts are provided by residues glycine 115 and 135 to 140; that span reads VGDYIL.

It belongs to the RNA methyltransferase TrmD family. In terms of assembly, homodimer.

Its subcellular location is the cytoplasm. It catalyses the reaction guanosine(37) in tRNA + S-adenosyl-L-methionine = N(1)-methylguanosine(37) in tRNA + S-adenosyl-L-homocysteine + H(+). Functionally, specifically methylates guanosine-37 in various tRNAs. The sequence is that of tRNA (guanine-N(1)-)-methyltransferase from Rickettsia akari (strain Hartford).